A 344-amino-acid chain; its full sequence is MNPLALTIFLLSLAIGTTITLSSFHWLLAWIGLEINTLAIIPLMTKTPHPRAIEAATKYFLTQAAASALVLFSSLISAWQTGEWSINSLMDLPMNILSIALMMKLGLAPLHFWIPEVLQGISLPTGLILSTWQKIAPMALLLQTSHLINLNLTIALGLTSIMVGGWGGIGQTQLRKIMAFSSIGHLGWIIVILKFDPQLSLLNFVLYIIMTAAMFMSLTTISATKMLEISTSWSKTPALTTTTMLILLSLAGLPPLTGFTPKLLITLELVKQNATLLAVMVMFISLLALFFYIRLTYVVTLTLSPNTPNSLLTWRTASRSYSTTAIMNTMALILLPITPTLLLL.

Helical transmembrane passes span 1-21 (MNPL…TITL), 24-44 (FHWL…IPLM), 59-79 (YFLT…ISAW), 94-114 (MNIL…HFWI), 121-141 (ISLP…MALL), 150-170 (LNLT…GGIG), 177-197 (IMAF…KFDP), 201-221 (LLNF…LTTI), 245-265 (LILL…KLLI), 273-293 (NATL…FFYI), and 324-344 (TAIM…LLLL).

The protein belongs to the complex I subunit 2 family.

Its subcellular location is the mitochondrion inner membrane. It catalyses the reaction a ubiquinone + NADH + 5 H(+)(in) = a ubiquinol + NAD(+) + 4 H(+)(out). Its function is as follows. Core subunit of the mitochondrial membrane respiratory chain NADH dehydrogenase (Complex I) that is believed to belong to the minimal assembly required for catalysis. Complex I functions in the transfer of electrons from NADH to the respiratory chain. The immediate electron acceptor for the enzyme is believed to be ubiquinone. The polypeptide is NADH-ubiquinone oxidoreductase chain 2 (MT-ND2) (Aquarana catesbeiana (American bullfrog)).